The sequence spans 310 residues: ADP-L-glycero-D-manno-heptose-6-epimerase (310 aa).

Residues 10–11 (FI), 31–32 (DN), K38, K53, 75–79 (EGACS), and N92 contribute to the NADP(+) site. Y140 functions as the Proton acceptor in the catalytic mechanism. K144 is a binding site for NADP(+). N169 provides a ligand contact to substrate. Positions 170 and 178 each coordinate NADP(+). The active-site Proton acceptor is K178. Substrate-binding positions include S180, H187, 201–204 (FEGS), R209, and Y272.

It belongs to the NAD(P)-dependent epimerase/dehydratase family. HldD subfamily. Homopentamer. NADP(+) serves as cofactor.

It carries out the reaction ADP-D-glycero-beta-D-manno-heptose = ADP-L-glycero-beta-D-manno-heptose. It participates in nucleotide-sugar biosynthesis; ADP-L-glycero-beta-D-manno-heptose biosynthesis; ADP-L-glycero-beta-D-manno-heptose from D-glycero-beta-D-manno-heptose 7-phosphate: step 4/4. Catalyzes the interconversion between ADP-D-glycero-beta-D-manno-heptose and ADP-L-glycero-beta-D-manno-heptose via an epimerization at carbon 6 of the heptose. The polypeptide is ADP-L-glycero-D-manno-heptose-6-epimerase (Salmonella arizonae (strain ATCC BAA-731 / CDC346-86 / RSK2980)).